The sequence spans 543 residues: Cytochrome P450 monooxygenase sphH (543 aa).

The next 2 helical transmembrane spans lie at 1-21 and 32-52; these read MGPI…SVYF and IATF…YQLF. A heme-binding site is contributed by Cys487.

It belongs to the cytochrome P450 family. Requires heme as cofactor.

The protein localises to the membrane. It carries out the reaction presphingofungin + 2 reduced [NADPH--hemoprotein reductase] + O2 = sphingofungin B1 + 2 oxidized [NADPH--hemoprotein reductase] + H2O + 2 H(+). Its pathway is secondary metabolite biosynthesis. Its function is as follows. Cytochrome P450 monooxygenase; part of the gene cluster that mediates the biosynthesis of sphingofungins, bioactive molecules acting as sphingolipid inhibitors via inhibiting serine palmitoyl transferase (SPT). Within the pathway, sphH catalyzes the conversion of presphingofungin into sphingofungin B1 via hydroxylagtion at position C-14. Sphingofungin biosynthesis starts with the PKS sphB that produces an C18 polyketide precursor 3-hydroxyoctadeca-4,10-dienoyl-ACP containing one delta-6 desaturation and one delta-12 desaturation. The aminoacyl transferase sphA uses the sphB product to produce 3-keto-presphingofungin by adding an aminomalonate molecule. SphF then reduces the C-3 ketone of 3-keto-presphingofungin which leads to presphingofungin. The cytochrome P450 monooxygenase sphH converts presphingofungin into sphingofungin B1 which is further converted to sphingofungin B by the dioxygenase sphC. SphC is also able to convert presphingofungin into sphingofungin B2. The acetyltransferase sphE acetylates sphingofungin B to produce sphingofungin C, but can also convert sphingofungin B1 into sphingofungin C1 and sphingofungin B2 into sphingofungin C2. Finally, sphingofungin C can be spontaneously converted into sphingofungin D. The sequence is that of Cytochrome P450 monooxygenase sphH from Aspergillus fumigatus (strain CBS 144.89 / FGSC A1163 / CEA10) (Neosartorya fumigata).